Consider the following 156-residue polypeptide: Cyanate hydratase (156 aa).

Residues R96, E99, and S122 contribute to the active site.

It belongs to the cyanase family.

It carries out the reaction cyanate + hydrogencarbonate + 3 H(+) = NH4(+) + 2 CO2. Its function is as follows. Catalyzes the reaction of cyanate with bicarbonate to produce ammonia and carbon dioxide. This Pseudomonas aeruginosa (strain UCBPP-PA14) protein is Cyanate hydratase.